We begin with the raw amino-acid sequence, 364 residues long: Aminomethyltransferase (364 aa).

This sequence belongs to the GcvT family. The glycine cleavage system is composed of four proteins: P, T, L and H.

The catalysed reaction is N(6)-[(R)-S(8)-aminomethyldihydrolipoyl]-L-lysyl-[protein] + (6S)-5,6,7,8-tetrahydrofolate = N(6)-[(R)-dihydrolipoyl]-L-lysyl-[protein] + (6R)-5,10-methylene-5,6,7,8-tetrahydrofolate + NH4(+). Its function is as follows. The glycine cleavage system catalyzes the degradation of glycine. The polypeptide is Aminomethyltransferase (Salmonella arizonae (strain ATCC BAA-731 / CDC346-86 / RSK2980)).